A 148-amino-acid polypeptide reads, in one-letter code: Aspartate 1-decarboxylase (148 aa).

The active-site Schiff-base intermediate with substrate; via pyruvic acid is Ser25. The residue at position 25 (Ser25) is a Pyruvic acid (Ser). Thr57 is a substrate binding site. Tyr58 serves as the catalytic Proton donor. 73–75 provides a ligand contact to substrate; the sequence is GAA.

This sequence belongs to the PanD family. Heterooctamer of four alpha and four beta subunits. It depends on pyruvate as a cofactor. Post-translationally, is synthesized initially as an inactive proenzyme, which is activated by self-cleavage at a specific serine bond to produce a beta-subunit with a hydroxyl group at its C-terminus and an alpha-subunit with a pyruvoyl group at its N-terminus.

It localises to the cytoplasm. The catalysed reaction is L-aspartate + H(+) = beta-alanine + CO2. It functions in the pathway cofactor biosynthesis; (R)-pantothenate biosynthesis; beta-alanine from L-aspartate: step 1/1. Functionally, catalyzes the pyruvoyl-dependent decarboxylation of aspartate to produce beta-alanine. In Rhodococcus jostii (strain RHA1), this protein is Aspartate 1-decarboxylase.